The chain runs to 594 residues: UvrABC system protein C (594 aa).

In terms of domain architecture, GIY-YIG spans 14 to 91 (DQPGCYLMKD…IKKHDPKYNI (78 aa)). Residues 196 to 231 (KEVRSELETKMYEASEKLEFERAKELRDQIAHIDAI) form the UVR domain.

This sequence belongs to the UvrC family. As to quaternary structure, interacts with UvrB in an incision complex.

It is found in the cytoplasm. Its function is as follows. The UvrABC repair system catalyzes the recognition and processing of DNA lesions. UvrC both incises the 5' and 3' sides of the lesion. The N-terminal half is responsible for the 3' incision and the C-terminal half is responsible for the 5' incision. The protein is UvrABC system protein C of Bacillus cereus (strain Q1).